The chain runs to 910 residues: DNA repair and recombination protein RAD54B (910 aa).

The span at 1–14 (MRRSAAPSQLQGNS) shows a compositional bias: polar residues. The tract at residues 1–33 (MRRSAAPSQLQGNSFKKPKFIPPGRSNPGLNEE) is disordered. A Phosphoserine modification is found at Ser14. The Helicase ATP-binding domain maps to 313–480 (GMRMNGRCGA…FALIDFVNPG (168 aa)). 326-333 (DEMGLGKT) serves as a coordination point for ATP. The DEGH box signature appears at 431 to 434 (DEGH). The region spanning 649–810 (KLLAVIHELR…HIQFSVEELK (162 aa)) is the Helicase C-terminal domain.

The protein belongs to the SNF2/RAD54 helicase family. Interacts with RAD51 through the NH2-terminal domain. Immunoprecipitation experiments show that the interaction is constitutive and not induced by ionizing radiation. The interaction may be indirect. In terms of tissue distribution, abundantly expressed in testis and spleen. Relatively low levels observed in thymus, prostate, ovary and colon.

It localises to the nucleus. Functionally, involved in DNA repair and mitotic recombination. May play an active role in recombination processes in concert with other members of the RAD52 epistasis group. This Homo sapiens (Human) protein is DNA repair and recombination protein RAD54B (RAD54B).